Reading from the N-terminus, the 617-residue chain is Guanylate cyclase soluble subunit beta-2 (617 aa).

His26 contributes to the heme binding site. The region spanning 391 to 519 (TILFSDVVTF…DTVNTASRME (129 aa)) is the Guanylate cyclase domain. Basic and acidic residues predominate over residues 577–586 (RSKTPVDHKG). The disordered stretch occupies residues 577-605 (RSKTPVDHKGSTQKASLPTTKLQGSVQPS). The span at 588-604 (TQKASLPTTKLQGSVQP) shows a compositional bias: polar residues.

This sequence belongs to the adenylyl cyclase class-4/guanylyl cyclase family. In terms of assembly, heterodimer of an alpha and a beta chain. The cofactor is heme. Expressed in gastric signet ring cell carcinoma, but not in the normal stomach.

The protein localises to the cytoplasm. The enzyme catalyses GTP = 3',5'-cyclic GMP + diphosphate. Activated by nitric oxide in the presence of magnesium or manganese ions. The protein is Guanylate cyclase soluble subunit beta-2 (GUCY1B2) of Homo sapiens (Human).